The following is a 339-amino-acid chain: Methionine import ATP-binding protein MetN 2 (339 aa).

The ABC transporter domain maps to 2–241 (ISFNNVSKLY…PKTKTTQNFV (240 aa)). Position 38-45 (38-45 (GFSGAGKS)) interacts with ATP.

Belongs to the ABC transporter superfamily. Methionine importer (TC 3.A.1.24) family. In terms of assembly, the complex is composed of two ATP-binding proteins (MetN), two transmembrane proteins (MetI) and a solute-binding protein (MetQ).

Its subcellular location is the cell membrane. The enzyme catalyses L-methionine(out) + ATP + H2O = L-methionine(in) + ADP + phosphate + H(+). The catalysed reaction is D-methionine(out) + ATP + H2O = D-methionine(in) + ADP + phosphate + H(+). Its function is as follows. Part of the ABC transporter complex MetNIQ involved in methionine import. Responsible for energy coupling to the transport system. The chain is Methionine import ATP-binding protein MetN 2 from Bacillus cereus (strain ATCC 14579 / DSM 31 / CCUG 7414 / JCM 2152 / NBRC 15305 / NCIMB 9373 / NCTC 2599 / NRRL B-3711).